A 115-amino-acid chain; its full sequence is NADH-ubiquinone oxidoreductase chain 3 (115 aa).

3 helical membrane passes run 3–23 (LLLT…IAFW), 55–75 (FFLV…LLPL), and 84–104 (LNTM…SLAY).

It belongs to the complex I subunit 3 family. In terms of assembly, core subunit of respiratory chain NADH dehydrogenase (Complex I) which is composed of 45 different subunits. Interacts with TMEM186. Interacts with TMEM242.

It localises to the mitochondrion inner membrane. It carries out the reaction a ubiquinone + NADH + 5 H(+)(in) = a ubiquinol + NAD(+) + 4 H(+)(out). Functionally, core subunit of the mitochondrial membrane respiratory chain NADH dehydrogenase (Complex I) which catalyzes electron transfer from NADH through the respiratory chain, using ubiquinone as an electron acceptor. Essential for the catalytic activity of complex I. This is NADH-ubiquinone oxidoreductase chain 3 from Balaenoptera musculus (Blue whale).